Reading from the N-terminus, the 178-residue chain is MSRVGKAPIAIPSGVDVKIDGQHVEVKGPKGTLDLTIPEPIVASIEDGQISVVRPDDHRKNRSLHGLSRSLVNNMVVGVTEGYTIKMEIFGVGYRVALKGKNLEFSLGYSHPVLIEAPEGITFAVDGNTKLSVSGIDKQKVGQIAAIIRRLRKDDPYKGKGIRYEGEQIRRKVGKTGK.

It belongs to the universal ribosomal protein uL6 family. Part of the 50S ribosomal subunit.

This protein binds to the 23S rRNA, and is important in its secondary structure. It is located near the subunit interface in the base of the L7/L12 stalk, and near the tRNA binding site of the peptidyltransferase center. In Corynebacterium diphtheriae (strain ATCC 700971 / NCTC 13129 / Biotype gravis), this protein is Large ribosomal subunit protein uL6.